Here is a 721-residue protein sequence, read N- to C-terminus: Polyribonucleotide nucleotidyltransferase (721 aa).

2 residues coordinate Mg(2+): D487 and D493. The KH domain occupies 554–613 (PRIETFKIPTDKIREVIGTGGKVIREIVEKTGAKVNIDDDGTVKVASSDGESIKAAIKWI). The 69-residue stretch at 623–691 (NAIYDGTVVK…DRGKTRLSMK (69 aa)) folds into the S1 motif domain. The disordered stretch occupies residues 697–721 (TGEDLEAKQKAEAEKAKAEGAPAAE). The span at 701 to 714 (LEAKQKAEAEKAKA) shows a compositional bias: basic and acidic residues.

It belongs to the polyribonucleotide nucleotidyltransferase family. The cofactor is Mg(2+).

Its subcellular location is the cytoplasm. It catalyses the reaction RNA(n+1) + phosphate = RNA(n) + a ribonucleoside 5'-diphosphate. Involved in mRNA degradation. Catalyzes the phosphorolysis of single-stranded polyribonucleotides processively in the 3'- to 5'-direction. The chain is Polyribonucleotide nucleotidyltransferase from Rhodopseudomonas palustris (strain BisA53).